Reading from the N-terminus, the 635-residue chain is Threonine--tRNA ligase (635 aa).

The region spanning 1–61 (MIAITLPDGS…DRDVALAIIT (61 aa)) is the TGS domain. Residues 242 to 533 (DHRKLGKSLD…LLENHAGALP (292 aa)) form a catalytic region. Zn(2+) contacts are provided by Cys-333, His-384, and His-510.

It belongs to the class-II aminoacyl-tRNA synthetase family. In terms of assembly, homodimer. Zn(2+) is required as a cofactor.

It localises to the cytoplasm. It catalyses the reaction tRNA(Thr) + L-threonine + ATP = L-threonyl-tRNA(Thr) + AMP + diphosphate + H(+). Catalyzes the attachment of threonine to tRNA(Thr) in a two-step reaction: L-threonine is first activated by ATP to form Thr-AMP and then transferred to the acceptor end of tRNA(Thr). Also edits incorrectly charged L-seryl-tRNA(Thr). The chain is Threonine--tRNA ligase from Cupriavidus pinatubonensis (strain JMP 134 / LMG 1197) (Cupriavidus necator (strain JMP 134)).